A 299-amino-acid chain; its full sequence is Inactive recombination-promoting nuclease-like protein RpnE (299 aa).

It belongs to the Rpn/YhgA-like nuclease family.

In terms of biological role, upon expression has no effect on RecA-independent DNA recombination, cell viability or DNA damage. The protein is Inactive recombination-promoting nuclease-like protein RpnE (yfaD) of Escherichia coli (strain K12).